The sequence spans 451 residues: Ubiquinone biosynthesis monooxygenase COQ6, mitochondrial (451 aa).

It belongs to the UbiH/COQ6 family. As to quaternary structure, component of a multi-subunit COQ enzyme complex. It depends on FAD as a cofactor.

The protein localises to the mitochondrion inner membrane. It carries out the reaction a 4-hydroxy-3-(all-trans-polyprenyl)benzoate + 2 reduced [2Fe-2S]-[ferredoxin] + O2 + 2 H(+) = a 3,4-dihydroxy-5-(all-trans-polyprenyl)benzoate + 2 oxidized [2Fe-2S]-[ferredoxin] + H2O. The catalysed reaction is a 2-methoxy-6-(all-trans-polyprenyl)phenol + 2 reduced [2Fe-2S]-[ferredoxin] + O2 + 2 H(+) = a 2-methoxy-6-(all-trans-polyprenyl)benzene-1,4-diol + 2 oxidized [2Fe-2S]-[ferredoxin] + H2O. The protein operates within cofactor biosynthesis; ubiquinone biosynthesis. Functionally, FAD-dependent monooxygenase required for two non-consecutive steps during ubiquinone biosynthesis. Required for the C5-ring hydroxylation during ubiquinone biosynthesis by catalyzing the hydroxylation of 4-hydroxy-3-(all-trans-polyprenyl)benzoic acid to 3,4-dihydroxy-5-(all-trans-polyprenyl)benzoic acid. Also acts downstream of coq4, for the C1-hydroxylation during ubiquinone biosynthesis by catalyzing the hydroxylation of 2-methoxy-6-(all-trans-polyprenyl)phenol to 2-methoxy-6-(all-trans-polyprenyl)benzene-1,4-diol. The electrons required for the hydroxylation reaction are funneled indirectly to coq-6 from NADPH via a ferredoxin/ferredoxin reductase system. This chain is Ubiquinone biosynthesis monooxygenase COQ6, mitochondrial, found in Caenorhabditis elegans.